Reading from the N-terminus, the 331-residue chain is Inactive serine/threonine-protein kinase BKN1 (331 aa).

Residue G2 is the site of N-myristoyl glycine attachment. C4 carries S-palmitoyl cysteine lipidation. The 271-residue stretch at 58 to 328 (DYSVRKFYKG…VLDGLNHIAE (271 aa)) folds into the Protein kinase domain.

Belongs to the protein kinase superfamily. Ser/Thr protein kinase family. Restricted to stigma in flowers.

It localises to the cell membrane. The protein resides in the nucleus. Functionally, collaboratively with BKN2/SZE2, involved in compatible pollen-stigma interactions. The sequence is that of Inactive serine/threonine-protein kinase BKN1 from Arabidopsis thaliana (Mouse-ear cress).